The chain runs to 231 residues: Ion-translocating oxidoreductase complex subunit E (231 aa).

The next 6 membrane-spanning stretches (helical) occupy residues 18–38 (GLVQLLGLCPLLAVTATVTNA), 39–59 (LGLGFATLLVLVGSNMLVSLV), 69–89 (IPVFVMIIAALVTSVQLLINA), 93–113 (GLYLSLGIFLPLIVTNCVIIG), 128–148 (AFDGLMMGIGFTCVLVVLGAG), and 182–202 (PFLLALLPPGAFIGMGLLIAG).

Belongs to the NqrDE/RnfAE family. In terms of assembly, the complex is composed of six subunits: RnfA, RnfB, RnfC, RnfD, RnfE and RnfG.

Its subcellular location is the cell inner membrane. Functionally, part of a membrane-bound complex that couples electron transfer with translocation of ions across the membrane. In Shewanella denitrificans (strain OS217 / ATCC BAA-1090 / DSM 15013), this protein is Ion-translocating oxidoreductase complex subunit E.